The sequence spans 178 residues: Large ribosomal subunit protein uL6 (178 aa).

The protein belongs to the universal ribosomal protein uL6 family. Part of the 50S ribosomal subunit.

In terms of biological role, this protein binds to the 23S rRNA, and is important in its secondary structure. It is located near the subunit interface in the base of the L7/L12 stalk, and near the tRNA binding site of the peptidyltransferase center. This Staphylococcus carnosus (strain TM300) protein is Large ribosomal subunit protein uL6.